A 219-amino-acid polypeptide reads, in one-letter code: Elongation factor Ts (219 aa).

The segment at 82–85 (TDFV) is involved in Mg(2+) ion dislocation from EF-Tu.

The protein belongs to the EF-Ts family.

Its subcellular location is the cytoplasm. Its function is as follows. Associates with the EF-Tu.GDP complex and induces the exchange of GDP to GTP. It remains bound to the aminoacyl-tRNA.EF-Tu.GTP complex up to the GTP hydrolysis stage on the ribosome. This is Elongation factor Ts from Trichodesmium erythraeum (strain IMS101).